The following is an 82-amino-acid chain: Putative membrane protein insertion efficiency factor (82 aa).

Belongs to the UPF0161 family.

It is found in the cell inner membrane. In terms of biological role, could be involved in insertion of integral membrane proteins into the membrane. This chain is Putative membrane protein insertion efficiency factor, found in Colwellia psychrerythraea (strain 34H / ATCC BAA-681) (Vibrio psychroerythus).